The sequence spans 406 residues: ATP phosphoribosyltransferase regulatory subunit (406 aa).

Belongs to the class-II aminoacyl-tRNA synthetase family. HisZ subfamily. In terms of assembly, heteromultimer composed of HisG and HisZ subunits.

It is found in the cytoplasm. It participates in amino-acid biosynthesis; L-histidine biosynthesis; L-histidine from 5-phospho-alpha-D-ribose 1-diphosphate: step 1/9. Functionally, required for the first step of histidine biosynthesis. May allow the feedback regulation of ATP phosphoribosyltransferase activity by histidine. The polypeptide is ATP phosphoribosyltransferase regulatory subunit (Methylococcus capsulatus (strain ATCC 33009 / NCIMB 11132 / Bath)).